Consider the following 294-residue polypeptide: Proteasome subunit beta (294 aa).

A propeptide spans 1-65 (MTADRPALRT…MESGDLAPHG (65 aa)) (removed in mature form; by autocatalysis). The active-site Nucleophile is the Thr-66.

Belongs to the peptidase T1B family. As to quaternary structure, the 20S proteasome core is composed of 14 alpha and 14 beta subunits that assemble into four stacked heptameric rings, resulting in a barrel-shaped structure. The two inner rings, each composed of seven catalytic beta subunits, are sandwiched by two outer rings, each composed of seven alpha subunits. The catalytic chamber with the active sites is on the inside of the barrel. Has a gated structure, the ends of the cylinder being occluded by the N-termini of the alpha-subunits. Is capped by the proteasome-associated ATPase, ARC.

It localises to the cytoplasm. It catalyses the reaction Cleavage of peptide bonds with very broad specificity.. The protein operates within protein degradation; proteasomal Pup-dependent pathway. Its activity is regulated as follows. The formation of the proteasomal ATPase ARC-20S proteasome complex, likely via the docking of the C-termini of ARC into the intersubunit pockets in the alpha-rings, may trigger opening of the gate for substrate entry. Interconversion between the open-gate and close-gate conformations leads to a dynamic regulation of the 20S proteasome proteolysis activity. In terms of biological role, component of the proteasome core, a large protease complex with broad specificity involved in protein degradation. This is Proteasome subunit beta from Rhodococcus jostii (strain RHA1).